Here is a 713-residue protein sequence, read N- to C-terminus: Glycine--tRNA ligase beta subunit (713 aa).

It belongs to the class-II aminoacyl-tRNA synthetase family. In terms of assembly, tetramer of two alpha and two beta subunits.

It is found in the cytoplasm. It carries out the reaction tRNA(Gly) + glycine + ATP = glycyl-tRNA(Gly) + AMP + diphosphate. This chain is Glycine--tRNA ligase beta subunit, found in Picosynechococcus sp. (strain ATCC 27264 / PCC 7002 / PR-6) (Agmenellum quadruplicatum).